The primary structure comprises 521 residues: Cell cycle checkpoint protein hpr-9 (521 aa).

Disordered stretches follow at residues 1–20, 318–375, and 492–521; these read MQAIHENYTDNPSSSITRER, QHEE…NRFV, and GTETTSKMRMSQQFDKRLGPLVSDTQYESR. 2 stretches are compositionally biased toward polar residues: residues 355 to 370 and 493 to 504; these read ESLSQEETTRSQSLPS and TETTSKMRMSQQ.

It belongs to the rad9 family. Putative component of the toroidal 9-1-1 (RAD9-RAD1-HUS1) complex, composed of hpr-9, mrt-2 and hus-1.

Functionally, may be a component of the 9-1-1 cell-cycle checkpoint response complex that plays a major role in DNA repair. This chain is Cell cycle checkpoint protein hpr-9, found in Caenorhabditis elegans.